Consider the following 336-residue polypeptide: Transmembrane protease serine 12 (336 aa).

The signal sequence occupies residues 1–18 (MASWALSAALLCLGGAFA). Residues 19–312 (YSELHSLSLR…HYLSQGNINR (294 aa)) lie on the Extracellular side of the membrane. The Peptidase S1 domain occupies 66–306 (IIGGSQADTG…FQEWMTHYLS (241 aa)). The cysteines at positions 95 and 111 are disulfide-linked. Residues His110 and Asp159 each act as charge relay system in the active site. Intrachain disulfides connect Cys194–Cys262, Cys225–Cys241, and Cys252–Cys282. 3 N-linked (GlcNAc...) asparagine glycosylation sites follow: Asn207, Asn237, and Asn246. The Charge relay system role is filled by Ser256. The helical transmembrane segment at 313 to 333 (LFNMDIVLGQVLTALGSVILL) threads the bilayer. Over 334 to 336 (GVT) the chain is Cytoplasmic.

Belongs to the peptidase S1 family. As to expression, exclusively expressed in the testis, from spermatocytes to elongated spermatids (at protein level).

The protein resides in the cell membrane. It is found in the cytoplasmic vesicle. The protein localises to the secretory vesicle. Its subcellular location is the acrosome. Required for male fertility. Plays a critical role in sperm capacitation and acrosome reactions during fertilization, and also plays a role in the regulation of proteins involved in spermatogenesis. Regulates protein pathways that promote chromosomal synapsis formation, double-strand break repair, formation of the inner mitochondrial membrane cristae and apoptosis in developing sperm. Required for normal sperm motility and binding to the zona pellucida, potentially via a role in ADAM3 protein maturation. This chain is Transmembrane protease serine 12, found in Mus musculus (Mouse).